The following is a 367-amino-acid chain: Porin Omp2a (367 aa).

The N-terminal stretch at Met-1–Ala-22 is a signal peptide.

The protein belongs to the alphaproteobacteria porin family. As to quaternary structure, monomer.

It localises to the cell outer membrane. Its function is as follows. Forms passive diffusion pores that allow small molecular weight hydrophilic materials across the outer membrane. The sequence is that of Porin Omp2a (omp2a) from Brucella suis.